Consider the following 195-residue polypeptide: ATP-dependent Clp protease proteolytic subunit 3 (195 aa).

S97 serves as the catalytic Nucleophile. H122 is an active-site residue.

Belongs to the peptidase S14 family. As to quaternary structure, fourteen ClpP subunits assemble into 2 heptameric rings which stack back to back to give a disk-like structure with a central cavity, resembling the structure of eukaryotic proteasomes.

The protein resides in the cytoplasm. It catalyses the reaction Hydrolysis of proteins to small peptides in the presence of ATP and magnesium. alpha-casein is the usual test substrate. In the absence of ATP, only oligopeptides shorter than five residues are hydrolyzed (such as succinyl-Leu-Tyr-|-NHMec, and Leu-Tyr-Leu-|-Tyr-Trp, in which cleavage of the -Tyr-|-Leu- and -Tyr-|-Trp bonds also occurs).. Functionally, cleaves peptides in various proteins in a process that requires ATP hydrolysis. Has a chymotrypsin-like activity. Plays a major role in the degradation of misfolded proteins. The protein is ATP-dependent Clp protease proteolytic subunit 3 of Rhizobium meliloti (strain 1021) (Ensifer meliloti).